Consider the following 186-residue polypeptide: Intraflagellar transport protein 27 homolog (186 aa).

GTP contacts are provided by residues 12-19 (GDPAVGKT), 64-68 (DSAGK), and 123-126 (TKTD).

This sequence belongs to the small GTPase superfamily. Rab family. In terms of assembly, component of the IFT complex B, at least composed of IFT20, IFT22, IFT25, IFT27, IFT46, IFT52, TRAF3IP1/IFT54, IFT57, IFT74, IFT80, IFT81, and IFT88. Interacts with IFT25. Interacts with IFT70B. Interacts with RABL2/RABL2A; binding is equal in the presence of GTP or GDP. Interacts with IFT88. Interacts with ARL6; recognizes and binds with the GTP-free form of ARL6. In terms of tissue distribution, expressed predominantly in the testis (at protein level). Co-localizes with RABL2/RABL2A in the midpiece of elongated spermatids within the testis (at protein level).

The protein resides in the cell projection. The protein localises to the cilium. It localises to the cytoplasm. It is found in the flagellum. Functionally, small GTPase-like component of the intraflagellar transport (IFT) complex B that promotes the exit of the BBSome complex from cilia via its interaction with ARL6. Not involved in entry of the BBSome complex into cilium. Prevents aggregation of GTP-free ARL6. Required for hedgehog signaling. Forms a subcomplex within the IFT complex B with IFT25. Its role in intraflagellar transport is mainly seen in tissues rich in ciliated cells such as kidney and testis. Essential for male fertility, spermiogenesis and sperm flagella formation. Plays a role in the early development of the kidney. May be involved in the regulation of ureteric bud initiation. This is Intraflagellar transport protein 27 homolog (Ift27) from Mus musculus (Mouse).